A 514-amino-acid polypeptide reads, in one-letter code: Inosine-5'-monophosphate dehydrogenase (514 aa).

CBS domains lie at F112–V171 and M175–T233. NAD(+)-binding positions include D270 to S272 and G320 to G322. 2 residues coordinate K(+): G322 and G324. An IMP-binding site is contributed by S325. C327 contributes to the K(+) binding site. Catalysis depends on C327, which acts as the Thioimidate intermediate. Residues D360–G362, G383–G384, and Y407–G411 contribute to the IMP site. Catalysis depends on R425, which acts as the Proton acceptor. Q437 is a binding site for IMP. Residues E496, G497, and G498 each coordinate K(+). A Microbody targeting signal motif is present at residues A512–M514.

This sequence belongs to the IMPDH/GMPR family. As to quaternary structure, heterotetramer. Interacts with glycosomal protein sorting receptor PEX5. It depends on K(+) as a cofactor.

It is found in the glycosome. The catalysed reaction is IMP + NAD(+) + H2O = XMP + NADH + H(+). It participates in purine metabolism; XMP biosynthesis via de novo pathway; XMP from IMP: step 1/1. With respect to regulation, mycophenolic acid (MPA) is a non-competitive inhibitor that prevents formation of the closed enzyme conformation by binding to the same site as the amobile flap. In contrast, mizoribine monophosphate (MZP) is a competitive inhibitor that induces the closed conformation. MPA is a potent inhibitor of mammalian IMPDHs but a poor inhibitor of the bacterial enzymes. MZP is a more potent inhibitor of bacterial IMPDH. Potently inhibited by MPA. Inhibited by XMP and GMP. Functionally, catalyzes the conversion of inosine 5'-phosphate (IMP) to xanthosine 5'-phosphate (XMP), the first committed and rate-limiting step in the de novo synthesis of guanine nucleotides, and therefore plays an important role in the regulation of cell growth. This is Inosine-5'-monophosphate dehydrogenase from Leishmania donovani.